The following is a 100-amino-acid chain: RxLR effector protein PITG_18683 (100 aa).

An N-terminal signal peptide occupies residues Met1–Ala22. A RxLR-dEER motif is present at residues Arg43 to Arg57. A Calmodulin-binding motif motif is present at residues Lys78 to Lys82.

The protein belongs to the RxLR effector family. In terms of assembly, interacts with the host calmodulin.

The protein resides in the secreted. The protein localises to the host cell. In terms of biological role, secreted effector that associates with calmodulin to interfere with plant defense-associated calcium signaling in hosts. This Phytophthora infestans (strain T30-4) (Potato late blight agent) protein is RxLR effector protein PITG_18683.